A 507-amino-acid polypeptide reads, in one-letter code: Chromosomal replication initiator protein DnaA (507 aa).

The tract at residues 1-87 (MSVELWQQCV…IGSKRSSAPR (87 aa)) is domain I, interacts with DnaA modulators. Over residues 85-110 (APRAAPNAPLAAAQVSQAQANAAPAS) the composition is skewed to low complexity. Residues 85 to 158 (APRAAPNAPL…QQAPVRAEQR (74 aa)) are disordered. Residues 87-170 (RAAPNAPLAA…QVEGALKHTS (84 aa)) form a domain II region. Over residues 126 to 140 (QKTEEISEEPSRDSF) the composition is skewed to basic and acidic residues. Residues 171-387 (YLNRTFTFEN…GALKRVIAHS (217 aa)) are domain III, AAA+ region. ATP contacts are provided by Gly215, Gly217, Lys218, and Thr219. The domain IV, binds dsDNA stretch occupies residues 388–507 (HFMGRDITIE…YKNLLRTLTT (120 aa)).

The protein belongs to the DnaA family. As to quaternary structure, oligomerizes as a right-handed, spiral filament on DNA at oriC.

The protein localises to the cytoplasm. Plays an essential role in the initiation and regulation of chromosomal replication. ATP-DnaA binds to the origin of replication (oriC) to initiate formation of the DNA replication initiation complex once per cell cycle. Binds the DnaA box (a 9 base pair repeat at the origin) and separates the double-stranded (ds)DNA. Forms a right-handed helical filament on oriC DNA; dsDNA binds to the exterior of the filament while single-stranded (ss)DNA is stabiized in the filament's interior. The ATP-DnaA-oriC complex binds and stabilizes one strand of the AT-rich DNA unwinding element (DUE), permitting loading of DNA polymerase. After initiation quickly degrades to an ADP-DnaA complex that is not apt for DNA replication. Binds acidic phospholipids. This Pseudomonas fluorescens (strain Pf0-1) protein is Chromosomal replication initiator protein DnaA.